The following is an 86-amino-acid chain: Putative membrane protein insertion efficiency factor (86 aa).

The protein belongs to the UPF0161 family.

It localises to the cell inner membrane. In terms of biological role, could be involved in insertion of integral membrane proteins into the membrane. This is Putative membrane protein insertion efficiency factor from Pasteurella multocida (strain Pm70).